Consider the following 325-residue polypeptide: Lipoyl synthase (325 aa).

[4Fe-4S] cluster is bound by residues Cys71, Cys76, Cys82, Cys97, Cys101, Cys104, and Ser311. The 218-residue stretch at 83–300 (FSGGTATFMI…ERQALAMGFT (218 aa)) folds into the Radical SAM core domain.

The protein belongs to the radical SAM superfamily. Lipoyl synthase family. The cofactor is [4Fe-4S] cluster.

The protein resides in the cytoplasm. It catalyses the reaction [[Fe-S] cluster scaffold protein carrying a second [4Fe-4S](2+) cluster] + N(6)-octanoyl-L-lysyl-[protein] + 2 oxidized [2Fe-2S]-[ferredoxin] + 2 S-adenosyl-L-methionine + 4 H(+) = [[Fe-S] cluster scaffold protein] + N(6)-[(R)-dihydrolipoyl]-L-lysyl-[protein] + 4 Fe(3+) + 2 hydrogen sulfide + 2 5'-deoxyadenosine + 2 L-methionine + 2 reduced [2Fe-2S]-[ferredoxin]. Its pathway is protein modification; protein lipoylation via endogenous pathway; protein N(6)-(lipoyl)lysine from octanoyl-[acyl-carrier-protein]: step 2/2. Its function is as follows. Catalyzes the radical-mediated insertion of two sulfur atoms into the C-6 and C-8 positions of the octanoyl moiety bound to the lipoyl domains of lipoate-dependent enzymes, thereby converting the octanoylated domains into lipoylated derivatives. The polypeptide is Lipoyl synthase (Methylobacillus flagellatus (strain ATCC 51484 / DSM 6875 / VKM B-1610 / KT)).